Consider the following 328-residue polypeptide: Tetraacyldisaccharide 4'-kinase (328 aa).

An ATP-binding site is contributed by 55–62; it reads TAGGNGKT.

Belongs to the LpxK family.

The catalysed reaction is a lipid A disaccharide + ATP = a lipid IVA + ADP + H(+). The protein operates within glycolipid biosynthesis; lipid IV(A) biosynthesis; lipid IV(A) from (3R)-3-hydroxytetradecanoyl-[acyl-carrier-protein] and UDP-N-acetyl-alpha-D-glucosamine: step 6/6. Transfers the gamma-phosphate of ATP to the 4'-position of a tetraacyldisaccharide 1-phosphate intermediate (termed DS-1-P) to form tetraacyldisaccharide 1,4'-bis-phosphate (lipid IVA). The protein is Tetraacyldisaccharide 4'-kinase of Escherichia fergusonii (strain ATCC 35469 / DSM 13698 / CCUG 18766 / IAM 14443 / JCM 21226 / LMG 7866 / NBRC 102419 / NCTC 12128 / CDC 0568-73).